A 328-amino-acid polypeptide reads, in one-letter code: Malate dehydrogenase (328 aa).

11–17 (GAAGQIG) contacts NAD(+). R94 and R100 together coordinate substrate. Residues N107, Q114, and 131–133 (VGN) each bind NAD(+). The substrate site is built by N133 and R164. H189 acts as the Proton acceptor in catalysis.

It belongs to the LDH/MDH superfamily. MDH type 2 family.

The catalysed reaction is (S)-malate + NAD(+) = oxaloacetate + NADH + H(+). Functionally, catalyzes the reversible oxidation of malate to oxaloacetate. This is Malate dehydrogenase from Stenotrophomonas maltophilia (strain R551-3).